Reading from the N-terminus, the 177-residue chain is MADGTVILDTAGVKRALTRIAHEILERNKGVDGLVLVGIRTGGVHLAREIVARLEEIEGATVPVGEVDITLYRDDFKGHAPHLPVGKTDIPFSLETKRVVLVDDVLFTGRTIRAAMDAIMDHGRPACIQLAVLVDRGHRELPIRADFVGRNVPTSLKEKIAVLFDAANRPTDVVLEK.

A PRPP-binding motif is present at residues 99 to 111 (VVLVDDVLFTGRT).

This sequence belongs to the purine/pyrimidine phosphoribosyltransferase family. PyrR subfamily.

The catalysed reaction is UMP + diphosphate = 5-phospho-alpha-D-ribose 1-diphosphate + uracil. In terms of biological role, regulates the transcription of the pyrimidine nucleotide (pyr) operon in response to exogenous pyrimidines. Its function is as follows. Also displays a weak uracil phosphoribosyltransferase activity which is not physiologically significant. In Geobacter sulfurreducens (strain ATCC 51573 / DSM 12127 / PCA), this protein is Bifunctional protein PyrR.